The sequence spans 476 residues: Transcription factor HBP-1b(c1) (476 aa).

3 disordered regions span residues 1-29, 133-159, and 171-207; these read ESRR…FGAP, HNND…PDID, and QLAA…RKSR. The span at 10–25 shows a compositional bias: low complexity; the sequence is AAAAAAAGDPRGPMPG. Positions 135–144 are enriched in polar residues; sequence NDNWGESSMA. Over residues 180–191 the composition is skewed to basic and acidic residues; the sequence is SSDKSRDKLDHK. Positions 189-252 constitute a bZIP domain; sequence DHKSLRRLAQ…SSGDQSQSAS (64 aa). Residues 191–211 are basic motif; the sequence is KSLRRLAQNREAARKSRLRKK. The stretch at 201–242 forms a coiled coil; sequence EAARKSRLRKKAYIQNLESSRLKLTQLEQELQRARQQGIFIS. The segment at 217 to 231 is leucine-zipper; the sequence is LESSRLKLTQLEQEL. A DOG1 domain is found at 256-473; it reads AVAFDMEYAR…RALSSLWLAR (218 aa).

The protein belongs to the bZIP family. In terms of assembly, binds DNA as a dimer.

The protein resides in the nucleus. Functionally, transcriptional activator that binds specifically to the DNA sequence 5'-TGACG-3'. Recognizes ocs elements like the as-1 motif of the cauliflower mosaic virus 35S promoter. Binding to the as-1-like cis elements mediate auxin- and salicylic acid-inducible transcription. Binds to the hexamer motif 5'-ACGTCA-3' of histone gene promoters. In Triticum aestivum (Wheat), this protein is Transcription factor HBP-1b(c1).